Here is a 199-residue protein sequence, read N- to C-terminus: Superoxide dismutase [Mn/Fe] 2 (199 aa).

Fe(3+)-binding residues include His27, His81, Asp161, and His165. The Mn(2+) site is built by His27, His81, Asp161, and His165.

This sequence belongs to the iron/manganese superoxide dismutase family. Homodimer. Can also form a heterodimer with SodA. Mn(2+) is required as a cofactor. It depends on Fe(3+) as a cofactor.

It catalyses the reaction 2 superoxide + 2 H(+) = H2O2 + O2. In terms of biological role, destroys superoxide anion radicals which are normally produced within the cells and which are toxic to biological systems. Catalyzes the dismutation of superoxide anion radicals into O2 and H2O2 by successive reduction and oxidation of the transition metal ion at the active site. The sequence is that of Superoxide dismutase [Mn/Fe] 2 (sodM) from Staphylococcus aureus (strain bovine RF122 / ET3-1).